Reading from the N-terminus, the 125-residue chain is Small ribosomal subunit protein eS6 (125 aa).

Positions 90–109 (KGPGFRPKEKGERRKKTVRG) are disordered.

It belongs to the eukaryotic ribosomal protein eS6 family. As to quaternary structure, part of the 30S ribosomal subunit.

This chain is Small ribosomal subunit protein eS6, found in Pyrococcus furiosus (strain ATCC 43587 / DSM 3638 / JCM 8422 / Vc1).